The chain runs to 322 residues: Epoxide hydrolase A (322 aa).

The region spanning 27–131 is the AB hydrolase-1 domain; the sequence is PVVILAHGFP…AVAALSVPAL (105 aa). Aspartate 103 (nucleophile) is an active-site residue. Histidine 298 serves as the catalytic Proton acceptor.

This sequence belongs to the AB hydrolase superfamily. Epoxide hydrolase family. As to quaternary structure, homodimer.

It catalyses the reaction an epoxide + H2O = an ethanediol. In terms of biological role, could be involved in detoxification of extraneous host-cell epoxides. Catalyzes the hydrolysis of epoxide-containing substrates. This Mycobacterium tuberculosis (strain ATCC 25618 / H37Rv) protein is Epoxide hydrolase A (ephA).